Consider the following 122-residue polypeptide: Large ribosomal subunit protein uL14 (122 aa).

This sequence belongs to the universal ribosomal protein uL14 family. As to quaternary structure, part of the 50S ribosomal subunit. Forms a cluster with proteins L3 and L19. In the 70S ribosome, L14 and L19 interact and together make contacts with the 16S rRNA in bridges B5 and B8.

Its function is as follows. Binds to 23S rRNA. Forms part of two intersubunit bridges in the 70S ribosome. The chain is Large ribosomal subunit protein uL14 from Alkaliphilus metalliredigens (strain QYMF).